Here is a 119-residue protein sequence, read N- to C-terminus: Probable prefoldin subunit 6 (119 aa).

This sequence belongs to the prefoldin subunit beta family. Heterohexamer of two PFD-alpha type and four PFD-beta type subunits. May interact with MSP1.

Its function is as follows. Binds specifically to cytosolic chaperonin (c-CPN) and transfers target proteins to it. Binds to nascent polypeptide chain and promotes folding in an environment in which there are many competing pathways for nonnative proteins. This Plasmodium falciparum (isolate 3D7) protein is Probable prefoldin subunit 6.